We begin with the raw amino-acid sequence, 1013 residues long: Zinc finger and BTB domain-containing protein 4 (1013 aa).

The 123-residue stretch at 30 to 152 (CDVTLIAGDT…IYSARLALPG (123 aa)) folds into the BTB domain. K40 participates in a covalent cross-link: Glycyl lysine isopeptide (Lys-Gly) (interchain with G-Cter in SUMO2). The span at 67 to 110 (LPPATGGAAPNPATTTAASSSSSSSSSSSSSSSSASSSSSSSSS) shows a compositional bias: low complexity. 2 disordered regions span residues 67–124 (LPPA…SPPR) and 183–221 (DAWVPPTPAPMATSQPEEDSFGPGPRPAGEWEGDRAEAQ). Positions 111-121 (SPPPASPPASS) are enriched in pro residues. Residues 186 to 348 (VPPTPAPMAT…CRYCEKVFAL (163 aa)) are interaction with CBFA2T3. The C2H2-type 1; atypical zinc-finger motif lies at 234–256 (LPCPQCGKSFIHPKRLQTHEAQC). The interval 257–281 (RRGASTRGSTGLGAGGAGPGGPAGV) is disordered. Gly residues predominate over residues 266–279 (TGLGAGGAGPGGPA). C2H2-type zinc fingers lie at residues 309 to 331 (YVCAACERSYVTLSSLKRHSNVH), 337 to 359 (YPCRYCEKVFALAEYRTKHEVWH), and 365 to 388 (YQCIFCWETFVTYYNLKTHQRAFH). S391 is modified (phosphoserine). 4 disordered regions span residues 428–765 (KTYS…STRF), 783–852 (HGQR…DPII), 883–904 (GREPGGGRGKSGSEGPVGAGEG), and 972–1013 (VNPQ…GDVG). Residues 453–470 (ASPPPGPPPAPEPGPPPS) show a composition bias toward pro residues. 2 stretches are compositionally biased toward low complexity: residues 496–506 (TASTGGSQAAS) and 531–554 (ATPTSPATAVSPATAAGPAMATTT). K573 participates in a covalent cross-link: Glycyl lysine isopeptide (Lys-Gly) (interchain with G-Cter in SUMO2). Positions 576–590 (GGIGGGGGPPTGAGR) are enriched in gly residues. The segment covering 608–625 (IGEEAIVKRRISETDLRP) has biased composition (basic and acidic residues). Residue K615 forms a Glycyl lysine isopeptide (Lys-Gly) (interchain with G-Cter in SUMO2) linkage. The stretch at 627–663 (ELSGEEMEESEEDEEEEDEEEEEEDEEESKAGGEDQL) forms a coiled coil. Over residues 629 to 654 (SGEEMEESEEDEEEEDEEEEEEDEEE) the composition is skewed to acidic residues. The span at 678–689 (AAGGASVGGSGL) shows a compositional bias: gly residues. C2H2-type zinc fingers lie at residues 726–748 (HRCGDCAQTFTTLRKLRKHQEAH) and 765–787 (FTCPHCAKVCKTAAALSRHGQRH). T795 and T797 each carry phosphothreonine; by HIPK2. Over residues 836–846 (TAAEEASETAS) the composition is skewed to low complexity. The segment covering 883 to 902 (GREPGGGRGKSGSEGPVGAG) has biased composition (gly residues). Positions 976 to 995 (AAPPAPPTPPPPTLPPPIPP) are enriched in pro residues. T983 carries the post-translational modification Phosphothreonine; by HIPK2. The segment covering 997 to 1013 (GEGERAGVERTQKGDVG) has biased composition (basic and acidic residues).

Interacts with HIPK2. Interacts with CBFA2T3. Interacts with ZBTB38. Post-translationally, phosphorylated by HIPK2. This phosphorylation reduces stability and triggers ZBTB4 protein degradation in response to DNA damage.

The protein localises to the nucleus. It localises to the chromosome. In terms of biological role, transcriptional repressor with bimodal DNA-binding specificity. Represses transcription in a methyl-CpG-dependent manner. Binds with a higher affinity to methylated CpG dinucleotides in the consensus sequence 5'-CGCG-3' but can also bind to the non-methylated consensus sequence 5'-CTGCNA-3' also known as the consensus kaiso binding site (KBS). Can also bind specifically to a single methyl-CpG pair and can bind hemimethylated DNA but with a lower affinity compared to methylated DNA. Plays a role in postnatal myogenesis, may be involved in the regulation of satellite cells self-renewal. The chain is Zinc finger and BTB domain-containing protein 4 (ZBTB4) from Homo sapiens (Human).